A 233-amino-acid chain; its full sequence is Protein Mis18-alpha (233 aa).

Residues S36, S39, and S40 each carry the phosphoserine modification. Positions 80-178 (PLVFLCSGCR…NVEAVESYVL (99 aa)) constitute a Mis18 domain. Zn(2+)-binding residues include C85, C88, C141, and C144. Residue K162 forms a Glycyl lysine isopeptide (Lys-Gly) (interchain with G-Cter in SUMO2) linkage. S233 carries the post-translational modification Phosphoserine.

It belongs to the mis18 family. In terms of assembly, homodimer, and heterodimer with OIP5/MIS18B. Identified in a complex containing MIS18A, OIP5/MIS18B, MIS18BP1, RBBP7 and RBBP4.

The protein localises to the nucleus. Its subcellular location is the chromosome. The protein resides in the centromere. Its function is as follows. Required for recruitment of CENPA to centromeres and normal chromosome segregation during mitosis. The protein is Protein Mis18-alpha (MIS18A) of Plecturocebus moloch (Dusky titi monkey).